A 576-amino-acid polypeptide reads, in one-letter code: RING finger and SPRY domain-containing protein 1 (576 aa).

Residues Met-1–Gly-16 form the signal peptide. Residue Ser-50 is modified to Phosphoserine. A disordered region spans residues Ser-50 to Asn-99. The span at Asp-57 to Val-68 shows a compositional bias: polar residues. The segment covering Pro-83–Lys-97 has biased composition (basic residues). Residues Leu-300–Phe-483 enclose the B30.2/SPRY domain. N-linked (GlcNAc...) asparagine glycosylation occurs at Asn-314. The RING-type zinc finger occupies Cys-527 to Arg-562.

Its subcellular location is the secreted. The chain is RING finger and SPRY domain-containing protein 1 (RSPRY1) from Macaca fascicularis (Crab-eating macaque).